Consider the following 202-residue polypeptide: Peptidyl-tRNA hydrolase (202 aa).

Residue Tyr-14 participates in tRNA binding. The active-site Proton acceptor is His-19. TRNA contacts are provided by Phe-64, Asn-66, and Asn-112.

The protein belongs to the PTH family. As to quaternary structure, monomer.

Its subcellular location is the cytoplasm. The catalysed reaction is an N-acyl-L-alpha-aminoacyl-tRNA + H2O = an N-acyl-L-amino acid + a tRNA + H(+). Its function is as follows. Hydrolyzes ribosome-free peptidyl-tRNAs (with 1 or more amino acids incorporated), which drop off the ribosome during protein synthesis, or as a result of ribosome stalling. Catalyzes the release of premature peptidyl moieties from peptidyl-tRNA molecules trapped in stalled 50S ribosomal subunits, and thus maintains levels of free tRNAs and 50S ribosomes. This Methylobacterium radiotolerans (strain ATCC 27329 / DSM 1819 / JCM 2831 / NBRC 15690 / NCIMB 10815 / 0-1) protein is Peptidyl-tRNA hydrolase.